The following is a 351-amino-acid chain: Heat-inducible transcription repressor HrcA (351 aa).

This sequence belongs to the HrcA family.

Functionally, negative regulator of class I heat shock genes (grpE-dnaK-dnaJ and groELS operons). Prevents heat-shock induction of these operons. The polypeptide is Heat-inducible transcription repressor HrcA (Clostridium tetani (strain Massachusetts / E88)).